A 249-amino-acid polypeptide reads, in one-letter code: Sugar fermentation stimulation protein homolog (249 aa).

The protein belongs to the SfsA family.

The chain is Sugar fermentation stimulation protein homolog from Prochlorococcus marinus (strain MIT 9515).